Consider the following 404-residue polypeptide: Argininosuccinate synthase (404 aa).

Residues 9–17 and Ala-36 each bind ATP; that span reads AYSGGLDTS. An L-citrulline-binding site is contributed by Tyr-87. Gly-117 is an ATP binding site. L-aspartate contacts are provided by Thr-119, Asn-123, and Asp-124. Asn-123 is a binding site for L-citrulline. L-citrulline contacts are provided by Arg-127, Ser-176, and Glu-261.

Belongs to the argininosuccinate synthase family. Type 1 subfamily. In terms of assembly, homotetramer.

The protein resides in the cytoplasm. It catalyses the reaction L-citrulline + L-aspartate + ATP = 2-(N(omega)-L-arginino)succinate + AMP + diphosphate + H(+). The protein operates within amino-acid biosynthesis; L-arginine biosynthesis; L-arginine from L-ornithine and carbamoyl phosphate: step 2/3. This chain is Argininosuccinate synthase, found in Burkholderia pseudomallei (strain K96243).